A 227-amino-acid chain; its full sequence is Atypical response regulator protein ChxR (227 aa).

The region spanning 6–108 (HVLLVSEHWD…ILKSAISLFL (103 aa)) is the Response regulatory domain. The segment at residues 117-213 (PESIRFGPNV…LRGVGYLFSD (97 aa)) is a DNA-binding region (ompR/PhoB-type).

In terms of assembly, homodimer.

May be a global positive regulator of transcription. Binds a cis-acting element of its own promoter DNA sequence and is hence probably also involved in its own transcription activation. The recognition sequence is 5'-WHGAWNH-N(3-5)-WHGAWNH-3', where W is A/T, H is C/A/T, N is G/C/A/T and the linker length in the middle is 3 to 5 nucleotides. This is Atypical response regulator protein ChxR from Chlamydia trachomatis serovar L2 (strain ATCC VR-902B / DSM 19102 / 434/Bu).